The sequence spans 84 residues: Putative antitoxin VapB7 (84 aa).

Antitoxin component of a possible type II toxin-antitoxin (TA) system. The cognate toxin is VapC7. In Mycobacterium tuberculosis (strain ATCC 25618 / H37Rv), this protein is Putative antitoxin VapB7 (vapB7).